A 628-amino-acid polypeptide reads, in one-letter code: Junctophilin-4 (628 aa).

At 1-606 (MSPGGKFDFD…RPAQPGAANP (606 aa)) the chain is on the cytoplasmic side. MORN repeat units follow at residues 50-72 (LGVFTGPGGHSYQGHWQQGKREG), 74-95 (GVERKSRWTYRGEWLGGLKGRS), 96-117 (GVWESVSGLRYAGLWKDGFQDG), 118-140 (YGTETYSDGGTYQGQWQAGKRHG), 141-163 (YGVRQSVPYHQAALLRSPRRTSL), and 164-186 (DSGHSDPPTPPPPLPLPGDEGGS). Disordered stretches follow at residues 158–214 (PRRT…RTPA) and 231–276 (GGRR…LIEG). The span at 170–179 (PPTPPPPLPL) shows a compositional bias: pro residues. 2 stretches are compositionally biased toward low complexity: residues 231-241 (GGRRSSLGSKR) and 253-272 (GSTGPPGSEASGPPAAAPPA). MORN repeat units lie at residues 317–339 (YGRTTRPDGSREEGKYKRNRLVH) and 340–362 (GGRVRSLLPLALRRGKVKEKVDR). Residues 415–602 (DLQPMLEAPG…AATERPAQPG (188 aa)) are disordered. Positions 432 to 443 (EGSDTEPLDEDS) are enriched in acidic residues. Composition is skewed to low complexity over residues 453–467 (PSEGSPELPSSPASS) and 528–541 (GSPLLGGCSDSSGS). A helical; Anchor for type IV membrane protein transmembrane segment spans residues 607-628 (LVVGAVALLDLSLAFLFSQLLT).

It belongs to the junctophilin family.

It localises to the cell membrane. The protein resides in the endoplasmic reticulum membrane. Its function is as follows. Junctophilins contribute to the formation of junctional membrane complexes (JMCs) which link the plasma membrane with the endoplasmic or sarcoplasmic reticulum in excitable cells. Provides a structural foundation for functional cross-talk between the cell surface and intracellular calcium release channels. JPH4 is brain-specific and appears to have an active role in certain neurons involved in motor coordination and memory. The polypeptide is Junctophilin-4 (JPH4) (Homo sapiens (Human)).